Consider the following 459-residue polypeptide: Fibrinogen C domain-containing protein 1 (459 aa).

Residues 1–22 (MVHERWKTVGSASQLEDRPRDK) form a disordered region. Over 1 to 33 (MVHERWKTVGSASQLEDRPRDKPQRASCSYVLC) the chain is Cytoplasmic. The chain crosses the membrane as a helical; Signal-anchor for type II membrane protein span at residues 34 to 54 (TVLLSLAVLLAVAVTGVVLFL). Residues 55-459 (NHTHTPGTAP…MKIRPVREDR (405 aa)) lie on the Extracellular side of the membrane. Residues 233 to 456 (CANGSRPRDC…FSEMKIRPVR (224 aa)) enclose the Fibrinogen C-terminal domain. Cysteines 242 and 271 form a disulfide. Residue asparagine 338 is glycosylated (N-linked (GlcNAc...) asparagine). Ca(2+)-binding residues include aspartate 391 and aspartate 393. A disulfide bridge connects residues cysteine 399 and cysteine 412.

As to quaternary structure, homotetramer; disulfide-linked.

Its subcellular location is the membrane. Acetyl group-binding receptor which shows a high-affinity and calcium-dependent binding to acetylated structures such as chitin, some N-acetylated carbohydrates, and amino acids, but not to their non-acetylated counterparts. Can facilitate the endocytosis of acetylated components. The polypeptide is Fibrinogen C domain-containing protein 1 (Fibcd1) (Mus musculus (Mouse)).